Here is a 150-residue protein sequence, read N- to C-terminus: Small heat shock protein IbpB (150 aa).

The 112-residue stretch at 26-137 (SQEPIDFPPY…QPQRIAIGGG (112 aa)) folds into the sHSP domain.

It belongs to the small heat shock protein (HSP20) family. Homodimer. Forms homomultimers of about 100-150 subunits at optimal growth temperatures. Conformation changes to oligomers at high temperatures or high ionic concentrations. The decrease in size of the multimers is accompanied by an increase in chaperone activity.

The protein resides in the cytoplasm. Its function is as follows. Associates with aggregated proteins, together with IbpA, to stabilize and protect them from irreversible denaturation and extensive proteolysis during heat shock and oxidative stress. Aggregated proteins bound to the IbpAB complex are more efficiently refolded and reactivated by the ATP-dependent chaperone systems ClpB and DnaK/DnaJ/GrpE. Its activity is ATP-independent. This is Small heat shock protein IbpB from Pectobacterium atrosepticum (strain SCRI 1043 / ATCC BAA-672) (Erwinia carotovora subsp. atroseptica).